A 136-amino-acid chain; its full sequence is Ribonuclease P protein component (136 aa).

The disordered stretch occupies residues 39-59; that stretch reads LPDVSSSKPARDTGAEQTSAP.

It belongs to the RnpA family. As to quaternary structure, consists of a catalytic RNA component (M1 or rnpB) and a protein subunit.

It catalyses the reaction Endonucleolytic cleavage of RNA, removing 5'-extranucleotides from tRNA precursor.. Its function is as follows. RNaseP catalyzes the removal of the 5'-leader sequence from pre-tRNA to produce the mature 5'-terminus. It can also cleave other RNA substrates such as 4.5S RNA. The protein component plays an auxiliary but essential role in vivo by binding to the 5'-leader sequence and broadening the substrate specificity of the ribozyme. The protein is Ribonuclease P protein component of Salinispora tropica (strain ATCC BAA-916 / DSM 44818 / JCM 13857 / NBRC 105044 / CNB-440).